Here is a 140-residue protein sequence, read N- to C-terminus: MDLHMFVPDFQAMREELTRLGFEELRTAEEVQEKLPTAKGVTLLAINSMCGCAGGIARPAAALALRQVKPDHLMTVFAGQDKEATAAARALFPQYPPSSPSFAVLKDGQAVAMIPRSQIEGSDPQTVAQRIVEAVQAARG.

Belongs to the bacilliredoxin family.

In Symbiobacterium thermophilum (strain DSM 24528 / JCM 14929 / IAM 14863 / T), this protein is Bacilliredoxin STH2395.